We begin with the raw amino-acid sequence, 170 residues long: NADH-quinone oxidoreductase subunit B (170 aa).

C46, C47, C111, and C141 together coordinate [4Fe-4S] cluster.

It belongs to the complex I 20 kDa subunit family. In terms of assembly, NDH-1 is composed of 14 different subunits. Subunits NuoB, C, D, E, F, and G constitute the peripheral sector of the complex. [4Fe-4S] cluster is required as a cofactor.

The protein localises to the cell membrane. The enzyme catalyses a quinone + NADH + 5 H(+)(in) = a quinol + NAD(+) + 4 H(+)(out). Functionally, NDH-1 shuttles electrons from NADH, via FMN and iron-sulfur (Fe-S) centers, to quinones in the respiratory chain. The immediate electron acceptor for the enzyme in this species is believed to be a menaquinone. Couples the redox reaction to proton translocation (for every two electrons transferred, four hydrogen ions are translocated across the cytoplasmic membrane), and thus conserves the redox energy in a proton gradient. This Geobacillus sp. (strain WCH70) protein is NADH-quinone oxidoreductase subunit B.